A 368-amino-acid chain; its full sequence is Aminomethyltransferase (368 aa).

This sequence belongs to the GcvT family. In terms of assembly, the glycine cleavage system is composed of four proteins: P, T, L and H.

The catalysed reaction is N(6)-[(R)-S(8)-aminomethyldihydrolipoyl]-L-lysyl-[protein] + (6S)-5,6,7,8-tetrahydrofolate = N(6)-[(R)-dihydrolipoyl]-L-lysyl-[protein] + (6R)-5,10-methylene-5,6,7,8-tetrahydrofolate + NH4(+). The glycine cleavage system catalyzes the degradation of glycine. In Xylella fastidiosa (strain 9a5c), this protein is Aminomethyltransferase.